Reading from the N-terminus, the 356-residue chain is Heme A synthase (356 aa).

5 helical membrane-spanning segments follow: residues 23–43 (IAIWLFVCCALVFAMVVVGGV), 105–125 (FHRLLGRVIGLAFFIPFLYFL), 141–161 (IFLLGALQGGMGWYMVKSGLV), 173–193 (AHLGLAFAIYAAMFWVALDLL), and 212–232 (STMLSALVFIMVLSGGFVAGI). H274 contacts heme. Helical transmembrane passes span 276 to 296 (LIAWTLAILVPIFWLKSRAVP), 307 to 327 (LLLIMLAVQITLGISTLLLVV), and 329 to 349 (LTLAAAHQAGALLLFTAALWV). A heme-binding site is contributed by H335.

This sequence belongs to the COX15/CtaA family. Type 2 subfamily. As to quaternary structure, interacts with CtaB. Requires heme b as cofactor.

The protein localises to the cell membrane. It catalyses the reaction Fe(II)-heme o + 2 A + H2O = Fe(II)-heme a + 2 AH2. It functions in the pathway porphyrin-containing compound metabolism; heme A biosynthesis; heme A from heme O: step 1/1. Catalyzes the conversion of heme O to heme A by two successive hydroxylations of the methyl group at C8. The first hydroxylation forms heme I, the second hydroxylation results in an unstable dihydroxymethyl group, which spontaneously dehydrates, resulting in the formyl group of heme A. The chain is Heme A synthase from Nitrosospira multiformis (strain ATCC 25196 / NCIMB 11849 / C 71).